Reading from the N-terminus, the 123-residue chain is Small ribosomal subunit protein uS13 (123 aa).

The interval Arg-93–Lys-123 is disordered.

It belongs to the universal ribosomal protein uS13 family. As to quaternary structure, part of the 30S ribosomal subunit. Forms a loose heterodimer with protein S19. Forms two bridges to the 50S subunit in the 70S ribosome.

In terms of biological role, located at the top of the head of the 30S subunit, it contacts several helices of the 16S rRNA. In the 70S ribosome it contacts the 23S rRNA (bridge B1a) and protein L5 of the 50S subunit (bridge B1b), connecting the 2 subunits; these bridges are implicated in subunit movement. Contacts the tRNAs in the A and P-sites. The chain is Small ribosomal subunit protein uS13 from Clostridium botulinum (strain Kyoto / Type A2).